Consider the following 448-residue polypeptide: Methionine aminopeptidase 2 (448 aa).

The tract at residues 1–47 is disordered; that stretch reads MTSSVDKVSQKVADVKLGSSKSTKNNKSKGKGKSNKNQVVEDDDEDD. Basic residues predominate over residues 24-34; it reads KNNKSKGKGKS. Substrate is bound at residue H198. Residues D218, D229, and H298 each contribute to the a divalent metal cation site. H306 lines the substrate pocket. Residues E331 and E429 each coordinate a divalent metal cation.

This sequence belongs to the peptidase M24A family. Methionine aminopeptidase eukaryotic type 2 subfamily. Requires Co(2+) as cofactor. The cofactor is Zn(2+). Mn(2+) serves as cofactor. It depends on Fe(2+) as a cofactor.

It is found in the cytoplasm. It carries out the reaction Release of N-terminal amino acids, preferentially methionine, from peptides and arylamides.. Functionally, cotranslationally removes the N-terminal methionine from nascent proteins. The N-terminal methionine is often cleaved when the second residue in the primary sequence is small and uncharged (Met-Ala-, Cys, Gly, Pro, Ser, Thr, or Val). This is Methionine aminopeptidase 2 from Komagataella phaffii (strain GS115 / ATCC 20864) (Yeast).